The chain runs to 119 residues: Large ribosomal subunit protein bL19 (119 aa).

Belongs to the bacterial ribosomal protein bL19 family.

In terms of biological role, this protein is located at the 30S-50S ribosomal subunit interface and may play a role in the structure and function of the aminoacyl-tRNA binding site. The protein is Large ribosomal subunit protein bL19 of Saccharopolyspora erythraea (strain ATCC 11635 / DSM 40517 / JCM 4748 / NBRC 13426 / NCIMB 8594 / NRRL 2338).